A 171-amino-acid polypeptide reads, in one-letter code: CASP-like protein 5A2 (171 aa).

Over 1–39 (MDGSAHLRDPPGPAVLRWRLEDMHIIPGTSGSLALRICQ) the chain is Cytoplasmic. Residues 40–60 (FSAAIVSFSVMISAANFSSVT) traverse the membrane as a helical segment. Residue A61 is a topological domain, extracellular. Residues 62–82 (FCFLVAAMVLQCMWSLSVATI) traverse the membrane as a helical segment. The Cytoplasmic portion of the chain corresponds to 83–106 (EGYAMLVGRSLRDSPLLSLFAVGD). The helical transmembrane segment at 107-127 (WVTAVITFAGACASAGIAVLV) threads the bilayer. Residues 128 to 148 (GRDIHRGCDVNFCGRYAAAAG) are Extracellular-facing. A helical transmembrane segment spans residues 149-169 (MAFLSWLLISTSFLFTFWLLA). The Cytoplasmic segment spans residues 170–171 (TR).

It belongs to the Casparian strip membrane proteins (CASP) family. Homodimer and heterodimers.

Its subcellular location is the cell membrane. This Pteridium aquilinum subsp. aquilinum (Bracken fern) protein is CASP-like protein 5A2.